A 427-amino-acid chain; its full sequence is Serine--tRNA ligase (427 aa).

231–233 contacts L-serine; that stretch reads TAE. 262-264 contacts ATP; the sequence is RSE. Glu-285 serves as a coordination point for L-serine. 349-352 contributes to the ATP binding site; sequence EISS. Ser-385 lines the L-serine pocket.

The protein belongs to the class-II aminoacyl-tRNA synthetase family. Type-1 seryl-tRNA synthetase subfamily. Homodimer. The tRNA molecule binds across the dimer.

The protein resides in the cytoplasm. It catalyses the reaction tRNA(Ser) + L-serine + ATP = L-seryl-tRNA(Ser) + AMP + diphosphate + H(+). It carries out the reaction tRNA(Sec) + L-serine + ATP = L-seryl-tRNA(Sec) + AMP + diphosphate + H(+). Its pathway is aminoacyl-tRNA biosynthesis; selenocysteinyl-tRNA(Sec) biosynthesis; L-seryl-tRNA(Sec) from L-serine and tRNA(Sec): step 1/1. Catalyzes the attachment of serine to tRNA(Ser). Is also able to aminoacylate tRNA(Sec) with serine, to form the misacylated tRNA L-seryl-tRNA(Sec), which will be further converted into selenocysteinyl-tRNA(Sec). This chain is Serine--tRNA ligase, found in Listeria innocua serovar 6a (strain ATCC BAA-680 / CLIP 11262).